The primary structure comprises 482 residues: ATP synthase subunit beta (482 aa).

161–168 provides a ligand contact to ATP; sequence GGAGVGKT.

Belongs to the ATPase alpha/beta chains family. F-type ATPases have 2 components, CF(1) - the catalytic core - and CF(0) - the membrane proton channel. CF(1) has five subunits: alpha(3), beta(3), gamma(1), delta(1), epsilon(1). CF(0) has three main subunits: a(1), b(2) and c(9-12). The alpha and beta chains form an alternating ring which encloses part of the gamma chain. CF(1) is attached to CF(0) by a central stalk formed by the gamma and epsilon chains, while a peripheral stalk is formed by the delta and b chains.

Its subcellular location is the cell inner membrane. The catalysed reaction is ATP + H2O + 4 H(+)(in) = ADP + phosphate + 5 H(+)(out). Functionally, produces ATP from ADP in the presence of a proton gradient across the membrane. The catalytic sites are hosted primarily by the beta subunits. This chain is ATP synthase subunit beta, found in Anaeromyxobacter dehalogenans (strain 2CP-C).